Here is a 306-residue protein sequence, read N- to C-terminus: Probable zinc metalloprotease VDBG_06923 (306 aa).

The N-terminal stretch at 1–28 (MNYEAEQPGANDDASGVAVALELARVLA) is a signal peptide. Zn(2+)-binding residues include aspartate 12 and glutamate 45. N-linked (GlcNAc...) asparagine glycosylation is present at asparagine 60. Aspartate 72 provides a ligand contact to Zn(2+). The 89-residue stretch at 218–306 (APAKVNNVRV…KSPVTIPFPT (89 aa)) folds into the Fibronectin type-III domain. N-linked (GlcNAc...) asparagine glycans are attached at residues asparagine 228, asparagine 234, and asparagine 244.

It belongs to the peptidase M28 family. M28B subfamily. The cofactor is Zn(2+).

The protein resides in the secreted. This Verticillium alfalfae (strain VaMs.102 / ATCC MYA-4576 / FGSC 10136) (Verticillium wilt of alfalfa) protein is Probable zinc metalloprotease VDBG_06923.